The following is a 373-amino-acid chain: Queuine tRNA-ribosyltransferase (373 aa).

The Proton acceptor role is filled by Asp90. Substrate contacts are provided by residues 90–94, Asp144, Gln193, and Gly220; that span reads DSGGF. The segment at 251-257 is RNA binding; the sequence is GVGTPED. Asp270 functions as the Nucleophile in the catalytic mechanism. The RNA binding; important for wobble base 34 recognition stretch occupies residues 275-279; it reads TRNAR. Cys308, Cys310, Cys313, and His339 together coordinate Zn(2+).

The protein belongs to the queuine tRNA-ribosyltransferase family. Homodimer. Within each dimer, one monomer is responsible for RNA recognition and catalysis, while the other monomer binds to the replacement base PreQ1. It depends on Zn(2+) as a cofactor.

It catalyses the reaction 7-aminomethyl-7-carbaguanine + guanosine(34) in tRNA = 7-aminomethyl-7-carbaguanosine(34) in tRNA + guanine. Its pathway is tRNA modification; tRNA-queuosine biosynthesis. Functionally, catalyzes the base-exchange of a guanine (G) residue with the queuine precursor 7-aminomethyl-7-deazaguanine (PreQ1) at position 34 (anticodon wobble position) in tRNAs with GU(N) anticodons (tRNA-Asp, -Asn, -His and -Tyr). Catalysis occurs through a double-displacement mechanism. The nucleophile active site attacks the C1' of nucleotide 34 to detach the guanine base from the RNA, forming a covalent enzyme-RNA intermediate. The proton acceptor active site deprotonates the incoming PreQ1, allowing a nucleophilic attack on the C1' of the ribose to form the product. After dissociation, two additional enzymatic reactions on the tRNA convert PreQ1 to queuine (Q), resulting in the hypermodified nucleoside queuosine (7-(((4,5-cis-dihydroxy-2-cyclopenten-1-yl)amino)methyl)-7-deazaguanosine). The sequence is that of Queuine tRNA-ribosyltransferase from Campylobacter jejuni subsp. doylei (strain ATCC BAA-1458 / RM4099 / 269.97).